Here is a 409-residue protein sequence, read N- to C-terminus: LL-diaminopimelate aminotransferase (409 aa).

Residues Tyr15 and Gly42 each contribute to the substrate site. Pyridoxal 5'-phosphate contacts are provided by residues Tyr72, 108–109, Tyr132, Asn186, Tyr217, and 245–247; these read AK and SFS. Residues Lys109, Tyr132, and Asn186 each coordinate substrate. At Lys248 the chain carries N6-(pyridoxal phosphate)lysine. Pyridoxal 5'-phosphate is bound by residues Arg256 and Asn291. Substrate is bound by residues Asn291 and Arg387.

This sequence belongs to the class-I pyridoxal-phosphate-dependent aminotransferase family. LL-diaminopimelate aminotransferase subfamily. As to quaternary structure, homodimer. Pyridoxal 5'-phosphate serves as cofactor.

It carries out the reaction (2S,6S)-2,6-diaminopimelate + 2-oxoglutarate = (S)-2,3,4,5-tetrahydrodipicolinate + L-glutamate + H2O + H(+). Its pathway is amino-acid biosynthesis; L-lysine biosynthesis via DAP pathway; LL-2,6-diaminopimelate from (S)-tetrahydrodipicolinate (aminotransferase route): step 1/1. Functionally, involved in the synthesis of meso-diaminopimelate (m-DAP or DL-DAP), required for both lysine and peptidoglycan biosynthesis. Catalyzes the direct conversion of tetrahydrodipicolinate to LL-diaminopimelate. In Phocaeicola vulgatus (strain ATCC 8482 / DSM 1447 / JCM 5826 / CCUG 4940 / NBRC 14291 / NCTC 11154) (Bacteroides vulgatus), this protein is LL-diaminopimelate aminotransferase.